The following is a 100-amino-acid chain: Large ribosomal subunit protein uL23 (100 aa).

Belongs to the universal ribosomal protein uL23 family. In terms of assembly, part of the 50S ribosomal subunit. Contacts protein L29, and trigger factor when it is bound to the ribosome.

One of the early assembly proteins it binds 23S rRNA. One of the proteins that surrounds the polypeptide exit tunnel on the outside of the ribosome. Forms the main docking site for trigger factor binding to the ribosome. This is Large ribosomal subunit protein uL23 from Synechococcus elongatus (strain ATCC 33912 / PCC 7942 / FACHB-805) (Anacystis nidulans R2).